A 201-amino-acid polypeptide reads, in one-letter code: Elongation factor Ts (201 aa).

The involved in Mg(2+) ion dislocation from EF-Tu stretch occupies residues 83 to 86; that stretch reads TDFV.

Belongs to the EF-Ts family.

The protein resides in the cytoplasm. In terms of biological role, associates with the EF-Tu.GDP complex and induces the exchange of GDP to GTP. It remains bound to the aminoacyl-tRNA.EF-Tu.GTP complex up to the GTP hydrolysis stage on the ribosome. The sequence is that of Elongation factor Ts from Methylacidiphilum infernorum (isolate V4) (Methylokorus infernorum (strain V4)).